Here is a 188-residue protein sequence, read N- to C-terminus: Ion-translocating oxidoreductase complex subunit B (188 aa).

The interval 1-23 (MIEAAVSMSALGLGLGLLLGVAA) is hydrophobic. Positions 29–88 (ESPPIVDAIEGILPGTNCGACGYPGCRGLAEAMSEGAAPVTACAPGGRDVALALAAIVET) constitute a 4Fe-4S domain. 12 residues coordinate [4Fe-4S] cluster: cysteine 46, cysteine 49, cysteine 54, cysteine 71, cysteine 113, cysteine 116, cysteine 119, cysteine 123, cysteine 143, cysteine 146, cysteine 149, and cysteine 153. 4Fe-4S ferredoxin-type domains are found at residues 104 to 133 (TVAF…GANR) and 134 to 163 (QIHT…ARVK).

The protein belongs to the 4Fe4S bacterial-type ferredoxin family. RnfB subfamily. As to quaternary structure, the complex is composed of six subunits: RnfA, RnfB, RnfC, RnfD, RnfE and RnfG. Requires [4Fe-4S] cluster as cofactor.

Its subcellular location is the cellular chromatophore membrane. In terms of biological role, part of a membrane-bound complex that couples electron transfer with translocation of ions across the membrane. This is Ion-translocating oxidoreductase complex subunit B from Cereibacter sphaeroides (strain ATCC 17023 / DSM 158 / JCM 6121 / CCUG 31486 / LMG 2827 / NBRC 12203 / NCIMB 8253 / ATH 2.4.1.) (Rhodobacter sphaeroides).